Here is a 140-residue protein sequence, read N- to C-terminus: Oocyte zinc finger protein XlCOF15 (140 aa).

5 consecutive C2H2-type zinc fingers follow at residues 6–28, 34–56, 62–84, 90–112, and 118–140; these read FTCK…QKIH, FTCT…QKVH, FICT…HVIH, FTCA…RAAH, and FICT…LKSH.

It belongs to the krueppel C2H2-type zinc-finger protein family.

The protein resides in the nucleus. Its function is as follows. May be involved in transcriptional regulation. The polypeptide is Oocyte zinc finger protein XlCOF15 (Xenopus laevis (African clawed frog)).